The following is a 329-amino-acid chain: DNA-directed RNA polymerase subunit alpha (329 aa).

Residues 1–231 (MQTNLLKPKT…EQLAVFAQLE (231 aa)) form an alpha N-terminal domain (alpha-NTD) region. The interval 249–329 (FDPILLRPVD…SWPPAGLDKR (81 aa)) is alpha C-terminal domain (alpha-CTD).

This sequence belongs to the RNA polymerase alpha chain family. As to quaternary structure, homodimer. The RNAP catalytic core consists of 2 alpha, 1 beta, 1 beta' and 1 omega subunit. When a sigma factor is associated with the core the holoenzyme is formed, which can initiate transcription.

The catalysed reaction is RNA(n) + a ribonucleoside 5'-triphosphate = RNA(n+1) + diphosphate. Its function is as follows. DNA-dependent RNA polymerase catalyzes the transcription of DNA into RNA using the four ribonucleoside triphosphates as substrates. This is DNA-directed RNA polymerase subunit alpha from Polaromonas sp. (strain JS666 / ATCC BAA-500).